A 1015-amino-acid chain; its full sequence is MSRRNRNNYLSIAAVRTIGLDFIEMLEETNRRSISDRNTLTDIYNTEFRDRDGGVKDPNFSRVLYALRNANKARLSRTGRVYFNTNVRTGLHDQWFRPRRRQQNQANATPGNVSSVTPSSDQGPSCPESGVRARRKLVKYILQRLNTTDRSHFIADKWGVRVSSELYIEDGKIRISVDEAEVYELKLFVENTGQEAVYFTYYTALCWLQYFTLEDSRKVTRNNPLRLEPREKYEVIVRFKSSHVGVYSATLAFEFKKNTQPTTRSFHIVRFIEAEYRSKLAALLGPTEPYKPLRLNISEPENCIIDEGFPPDGYLQNFLVNVLPLGKYIPPPDTTILAELLKEDCSSRIFRGKLKDLQSLLQSPLTFDNYAERFDLLLYLEECQMHVDIKRYNKDSVTLHRDRDKRLMGLNLPGVSENRPSVLRGDHLLLTKSEEVTFSNVTKYKGYVHRVELDQVKLGLSKRFLKDVYIDKMKFRVEFTVNRIPVRLQHRAVHMAVQHNLKDVLFPMASRSLNPVSPPALRLFDRKLEYNFQQYSAVCNIVAGTSKPAPYLVFGPPGTGKTVTIVEAIKQVEKNIPDAYILACAPSNSAADQLCEKLITSEHVDAHKIYRLYASSRNQKDIPKILKDNCNVDEEMIDFPCKEDLMSYKILICTLVTAGRLVTGGFSEDHFTHNFVDEAGHAVESETIISVAGLLNAEKGQLVLAGDPKQLGPILRSPLAINHGLDVSLLERLMTQNDLYKRGDVEFDNRYVSKLIMNYRSHPYILEVPNRLFYDGELKACADEISSNQYCMWEHLPSKGFPVIFHGVPGKDERESNSPSFFNIYEINILVDYLKKLLLTQPKKGISRIFPKDIGIIAPYRKQVEKIKRAIDADKDFQDYMGIDNLKVGSVEEFQGQERKVIMVSTVRSSVKYISLDETFNIGFLKNEKRFNVAVTRAKSLLIMVGNPMILRTDESWGRFIDFCLERGGYTGISITSVERIDDVESRLLALNIQDEETEESPVQRYVDPEFRNDY.

The disordered stretch occupies residues 94–130; that stretch reads QWFRPRRRQQNQANATPGNVSSVTPSSDQGPSCPESG. Positions 109-123 are enriched in polar residues; that stretch reads TPGNVSSVTPSSDQG. Position 555-562 (555-562) interacts with ATP; sequence GPPGTGKT. The short motif at 677–680 is the DEAG box element; sequence DEAG.

It belongs to the DNA2/NAM7 helicase family. SDE3 subfamily.

It is found in the cytoplasm. Its subcellular location is the P-body. The catalysed reaction is ATP + H2O = ADP + phosphate + H(+). Its function is as follows. Probable RNA helicase. Required for RNA-mediated gene silencing by the RNA-induced silencing complex (RISC). Required for both miRNA-mediated translational repression and miRNA-mediated cleavage of complementary mRNAs by RISC. This chain is Putative helicase mov-10-B.2 (mov10b.2), found in Danio rerio (Zebrafish).